The sequence spans 562 residues: Tissue-type plasminogen activator (562 aa).

The first 20 residues, 1–20 (MNAMKRGLCCVLLLCGAVFA), serve as a signal peptide directing secretion. Residues 21–32 (LPSQEIHARVRR) constitute a propeptide that is removed on maturation. Residues 33 to 35 (GAR) constitute a propeptide, removed by plasmin. One can recognise a Fibronectin type-I domain in the interval 39 to 81 (VICRDEKTQMIYQQHQSWLRPVLRSNRVEYCWCNSGRAQCHSV). 17 cysteine pairs are disulfide-bonded: Cys41–Cys71, Cys69–Cys78, Cys86–Cys97, Cys91–Cys108, Cys110–Cys119, Cys127–Cys208, Cys148–Cys190, Cys179–Cys203, Cys215–Cys296, Cys236–Cys278, Cys267–Cys291, Cys299–Cys430, Cys342–Cys358, Cys350–Cys419, Cys444–Cys519, Cys476–Cys492, and Cys509–Cys537. Residues 42–52 (RDEKTQMIYQQ) are important for binding to annexin A2. Residues 82 to 120 (PVRSCSEPRCFNGGTCQQALYFSDFVCQCPEGFAGKCCE) form the EGF-like domain. Thr96 carries an O-linked (Fuc) threonine glycan. Kringle domains are found at residues 126–208 (TCYE…TPAC) and 214–296 (DCYF…VPSC). Asn152 carries an N-linked (GlcNAc...) asparagine glycan. Residues 311–561 (IKGGLFADIA…YLDWIHDNMR (251 aa)) enclose the Peptidase S1 domain. Residues His357 and Asp406 each act as charge relay system in the active site. N-linked (GlcNAc...) asparagine glycosylation is present at Asn483. Ser513 (charge relay system) is an active-site residue.

Belongs to the peptidase S1 family. As to quaternary structure, heterodimer of chain A and chain B held by a disulfide bond. Binds to fibrin with high affinity. This interaction leads to an increase in the catalytic efficiency of the enzyme due to an increase in affinity for plasminogen. Similarly, binding to heparin increases the activation of plasminogen. Binds to annexin A2, cytokeratin-8, fibronectin and laminin. Binds to mannose receptor and the low-density lipoprotein receptor-related protein (LRP1); these proteins are involved in TPA clearance. Binds LRP1B; binding is followed by internalization and degradation. Forms heterodimer with SERPINA5. Interacts with SERPINE1. In complex with SERPINE1, interacts with SORL1. In terms of processing, the single chain, almost fully active enzyme, can be further processed into a two-chain fully active form by a cleavage after Arg-310 catalyzed by plasmin, tissue kallikrein or factor Xa.

It localises to the secreted. The protein localises to the extracellular space. The enzyme catalyses Specific cleavage of Arg-|-Val bond in plasminogen to form plasmin.. With respect to regulation, inhibited by SERPINA5. Inhibited by SERPINE1. Functionally, converts the abundant, but inactive, zymogen plasminogen to plasmin by hydrolyzing a single Arg-Val bond in plasminogen. By controlling plasmin-mediated proteolysis, it plays an important role in tissue remodeling and degradation, in cell migration and many other physiopathological events. During oocyte activation, plays a role in cortical granule reaction in the zona reaction, which contributes to the block to polyspermy. The protein is Tissue-type plasminogen activator (PLAT) of Pongo abelii (Sumatran orangutan).